Here is a 161-residue protein sequence, read N- to C-terminus: Nucleotide-binding protein HCH_04620 (161 aa).

The protein belongs to the YajQ family.

Nucleotide-binding protein. The chain is Nucleotide-binding protein HCH_04620 from Hahella chejuensis (strain KCTC 2396).